Reading from the N-terminus, the 118-residue chain is Superoxide-generating NADPH oxidase light chain subunit (118 aa).

Transmembrane regions (helical) follow at residues 9–29, 36–56, 62–82, and 83–103; these read WAAMIGMAACWCLIAGGIMGI, IAIYSICVGGVLYPLLYPLSF, AIFHQYYVAAALMAGLSVLCY, and FLVPTMLAAMVMDISAVVFLI.

It belongs to the p22phox family. In terms of assembly, composed of a heavy chain and a light chain.

Its subcellular location is the cell membrane. Functionally, critical component of the membrane-bound oxidase of phagocytes that generates superoxide. This Dictyostelium discoideum (Social amoeba) protein is Superoxide-generating NADPH oxidase light chain subunit (cybA).